A 325-amino-acid polypeptide reads, in one-letter code: Isoaspartyl peptidase/L-asparaginase (325 aa).

The Nucleophile role is filled by threonine 193. Residues 221–224 (RIGD) and 243–246 (TGKG) contribute to the substrate site.

Belongs to the Ntn-hydrolase family. As to quaternary structure, heterotetramer of two alpha and two beta chains arranged as a dimer of alpha/beta heterodimers. Post-translationally, cleaved into an alpha and beta chain by autocatalysis; this activates the enzyme. The N-terminal residue of the beta subunit is responsible for the nucleophile hydrolase activity. As to expression, expressed in ripening seeds and developing nodules.

The catalysed reaction is Cleavage of a beta-linked Asp residue from the N-terminus of a polypeptide.. Degrades proteins damaged by L-isoaspartyl residue formation (also known as beta-Asp residues). Also has L-asparaginase activity, which is used to liberate stored nitrogen during seed development. This is Isoaspartyl peptidase/L-asparaginase from Lupinus luteus (European yellow lupine).